The chain runs to 319 residues: 4-diphosphocytidyl-2-C-methyl-D-erythritol kinase (319 aa).

Residue Lys18 is part of the active site. 103–113 (PIGAGLAGGST) contacts ATP. Asp145 is an active-site residue.

The protein belongs to the GHMP kinase family. IspE subfamily.

It carries out the reaction 4-CDP-2-C-methyl-D-erythritol + ATP = 4-CDP-2-C-methyl-D-erythritol 2-phosphate + ADP + H(+). The protein operates within isoprenoid biosynthesis; isopentenyl diphosphate biosynthesis via DXP pathway; isopentenyl diphosphate from 1-deoxy-D-xylulose 5-phosphate: step 3/6. Its function is as follows. Catalyzes the phosphorylation of the position 2 hydroxy group of 4-diphosphocytidyl-2C-methyl-D-erythritol. The polypeptide is 4-diphosphocytidyl-2-C-methyl-D-erythritol kinase (Prochlorococcus marinus (strain NATL1A)).